The following is a 246-amino-acid chain: Small ribosomal subunit protein uS2 (246 aa).

This sequence belongs to the universal ribosomal protein uS2 family.

The sequence is that of Small ribosomal subunit protein uS2 from Burkholderia vietnamiensis (strain G4 / LMG 22486) (Burkholderia cepacia (strain R1808)).